Here is a 481-residue protein sequence, read N- to C-terminus: Aromatic amino acid aminotransferase C1773.13 (481 aa).

The protein belongs to the class-I pyridoxal-phosphate-dependent aminotransferase family. It depends on pyridoxal 5'-phosphate as a cofactor.

The protein resides in the cytoplasm. It catalyses the reaction an aromatic L-alpha-amino acid + 2-oxoglutarate = an aromatic oxo-acid + L-glutamate. Its function is as follows. Has aromatic amino acid transaminase activity. The chain is Aromatic amino acid aminotransferase C1773.13 from Schizosaccharomyces pombe (strain 972 / ATCC 24843) (Fission yeast).